We begin with the raw amino-acid sequence, 33 residues long: Photosystem II reaction center protein Psb30 (33 aa).

A helical membrane pass occupies residues 5-25 (VIAQLTVLALIVISGPLVIAL).

This sequence belongs to the Psb30/Ycf12 family. In terms of assembly, PSII is composed of 1 copy each of membrane proteins PsbA, PsbB, PsbC, PsbD, PsbE, PsbF, PsbH, PsbI, PsbJ, PsbK, PsbL, PsbM, PsbT, PsbX, PsbY, PsbZ, Psb30/Ycf12, peripheral proteins of the oxygen-evolving complex and a large number of cofactors. It forms dimeric complexes.

The protein localises to the plastid. Its subcellular location is the chloroplast thylakoid membrane. Its function is as follows. A core subunit of photosystem II (PSII), probably helps stabilize the reaction center. The polypeptide is Photosystem II reaction center protein Psb30 (Huperzia lucidula (Shining clubmoss)).